Reading from the N-terminus, the 332-residue chain is Ornithine carbamoyltransferase 1, catabolic (332 aa).

Residues 56-59 (STRT), Q83, R107, and 134-137 (HPTQ) contribute to the carbamoyl phosphate site. L-ornithine is bound by residues N167, D231, and 235–236 (SM). Carbamoyl phosphate is bound by residues 273–274 (CL) and R318.

The protein belongs to the aspartate/ornithine carbamoyltransferase superfamily. OTCase family.

It localises to the cytoplasm. It catalyses the reaction carbamoyl phosphate + L-ornithine = L-citrulline + phosphate + H(+). It participates in amino-acid degradation; L-arginine degradation via ADI pathway; carbamoyl phosphate from L-arginine: step 2/2. In terms of biological role, reversibly catalyzes the transfer of the carbamoyl group from carbamoyl phosphate (CP) to the N(epsilon) atom of ornithine (ORN) to produce L-citrulline. This Streptococcus agalactiae serotype III (strain NEM316) protein is Ornithine carbamoyltransferase 1, catabolic (arcB1).